Consider the following 204-residue polypeptide: Guanylate kinase (204 aa).

The Guanylate kinase-like domain occupies 5 to 184; the sequence is GLLLVLSGPS…AVNHIKAIVD (180 aa). 12-19 is a binding site for ATP; it reads GPSGVGKG.

This sequence belongs to the guanylate kinase family.

The protein resides in the cytoplasm. It carries out the reaction GMP + ATP = GDP + ADP. Its function is as follows. Essential for recycling GMP and indirectly, cGMP. In Lactobacillus delbrueckii subsp. bulgaricus (strain ATCC 11842 / DSM 20081 / BCRC 10696 / JCM 1002 / NBRC 13953 / NCIMB 11778 / NCTC 12712 / WDCM 00102 / Lb 14), this protein is Guanylate kinase.